The sequence spans 692 residues: UvrABC system protein B (692 aa).

The Helicase ATP-binding domain maps to 32-187 (ENIENGEKAQ…LLNDLVGIQF (156 aa)). 45–52 (GATGTGKT) contributes to the ATP binding site. A Beta-hairpin motif is present at residues 98 to 121 (YYDYYQPEAYVPSSDTYIEKDSSV). Positions 436-631 (QIDDLVGEIH…TIKKEIRDLI (196 aa)) constitute a Helicase C-terminal domain. In terms of domain architecture, UVR spans 656–691 (KALVKKLEKEMQQAAAALDFEGAAQLRDMVLELRAM).

It belongs to the UvrB family. In terms of assembly, forms a heterotetramer with UvrA during the search for lesions. Interacts with UvrC in an incision complex.

The protein resides in the cytoplasm. Functionally, the UvrABC repair system catalyzes the recognition and processing of DNA lesions. A damage recognition complex composed of 2 UvrA and 2 UvrB subunits scans DNA for abnormalities. Upon binding of the UvrA(2)B(2) complex to a putative damaged site, the DNA wraps around one UvrB monomer. DNA wrap is dependent on ATP binding by UvrB and probably causes local melting of the DNA helix, facilitating insertion of UvrB beta-hairpin between the DNA strands. Then UvrB probes one DNA strand for the presence of a lesion. If a lesion is found the UvrA subunits dissociate and the UvrB-DNA preincision complex is formed. This complex is subsequently bound by UvrC and the second UvrB is released. If no lesion is found, the DNA wraps around the other UvrB subunit that will check the other stand for damage. The sequence is that of UvrABC system protein B from Lactococcus lactis subsp. cremoris (strain SK11).